An 85-amino-acid chain; its full sequence is Protein BTH_I0359 (85 aa).

The sequence is that of Protein BTH_I0359 from Burkholderia thailandensis (strain ATCC 700388 / DSM 13276 / CCUG 48851 / CIP 106301 / E264).